Here is a 1070-residue protein sequence, read N- to C-terminus: Phosphatidylinositol 4,5-bisphosphate 3-kinase catalytic subunit beta isoform (1070 aa).

The PI3K-ABD domain maps to 26–115; sequence SDGSIPVDFL…LPVLKLVTRS (90 aa). The PI3K-RBD domain occupies 194–285; that stretch reads GGKLIVAVHF…RALPHFILVE (92 aa). Phosphoserine is present on Ser-324. The region spanning 327 to 496 is the C2 PI3K-type domain; sequence WENNNPFQIV…NATALHVKFP (170 aa). The Nuclear localization signal signature appears at 410-418; sequence KVKTKKSTK. Residues 524–701 enclose the PIK helical domain; sequence ANVSSRGGKK…GVILEAYCRG (178 aa). Positions 772-1053 constitute a PI3K/PI4K catalytic domain; that stretch reads YVEKCKYMDS…KFDEALRESW (282 aa). The tract at residues 778 to 784 is G-loop; sequence YMDSKMK. The tract at residues 916-924 is catalytic loop; that stretch reads GIGDRHSDN. The interval 935 to 961 is activation loop; sequence HIDFGHILGNFKSKFGIKRERVPFILT. Position 1070 is a phosphoserine; by autocatalysis (Ser-1070).

This sequence belongs to the PI3/PI4-kinase family. In terms of assembly, heterodimer of a catalytic subunit PIK3CB and a p85 regulatory subunit (PIK3R1, PIK3R2 or PIK3R3). Interaction with PIK3R2 is required for nuclear localization and nuclear export. Part of a complex with PIK3R1 and PTEN. Binding to PTEN may antagonize the lipid kinase activity under normal growth conditions. Part of a complex involved in autophagosome formation composed of PIK3C3 and PIK3R4. Interacts with BECN1, ATG14 and RAB5A. Autophosphorylation at Ser-1070 negatively regulates the phosphatidylinositol-4,5-bisphosphate 3-kinase activity. Expressed ubiquitously.

It is found in the cytoplasm. It localises to the nucleus. The catalysed reaction is a 1,2-diacyl-sn-glycero-3-phospho-(1D-myo-inositol-4,5-bisphosphate) + ATP = a 1,2-diacyl-sn-glycero-3-phospho-(1D-myo-inositol-3,4,5-trisphosphate) + ADP + H(+). It catalyses the reaction 1-octadecanoyl-2-(5Z,8Z,11Z,14Z)-eicosatetraenoyl-sn-glycero-3-phospho-1D-myo-inositol 4,5-bisphosphate + ATP = 1-octadecanoyl-2-(5Z,8Z,11Z,14Z-eicosatetraenoyl)-sn-glycero-3-phospho-(1D-myo-inositol 3,4,5-triphosphate) + ADP + H(+). It carries out the reaction L-seryl-[protein] + ATP = O-phospho-L-seryl-[protein] + ADP + H(+). Its pathway is phospholipid metabolism; phosphatidylinositol phosphate biosynthesis. In terms of biological role, phosphoinositide-3-kinase (PI3K) phosphorylates phosphatidylinositol derivatives at position 3 of the inositol ring to produce 3-phosphoinositides. Uses ATP and PtdIns(4,5)P2 (phosphatidylinositol 4,5-bisphosphate) to generate phosphatidylinositol 3,4,5-trisphosphate (PIP3). PIP3 plays a key role by recruiting PH domain-containing proteins to the membrane, including AKT1 and PDPK1, activating signaling cascades involved in cell growth, survival, proliferation, motility and morphology. Involved in the activation of AKT1 upon stimulation by G-protein coupled receptors (GPCRs) ligands such as CXCL12, sphingosine 1-phosphate, and lysophosphatidic acid. May also act downstream receptor tyrosine kinases. Required in different signaling pathways for stable platelet adhesion and aggregation. Plays a role in platelet activation signaling triggered by GPCRs, alpha-IIb/beta-3 integrins (ITGA2B/ ITGB3) and ITAM (immunoreceptor tyrosine-based activation motif)-bearing receptors such as GP6. Regulates the strength of adhesion of ITGA2B/ ITGB3 activated receptors necessary for the cellular transmission of contractile forces. Required for platelet aggregation induced by F2 (thrombin) and thromboxane A2 (TXA2). Has a role in cell survival. May have a role in cell migration. Involved in the early stage of autophagosome formation. Modulates the intracellular level of PtdIns3P (phosphatidylinositol 3-phosphate) and activates PIK3C3 kinase activity. May act as a scaffold, independently of its lipid kinase activity to positively regulate autophagy. May have a role in insulin signaling as scaffolding protein in which the lipid kinase activity is not required. May have a kinase-independent function in regulating cell proliferation and in clathrin-mediated endocytosis. Mediator of oncogenic signal in cell lines lacking PTEN. The lipid kinase activity is necessary for its role in oncogenic transformation. Required for the growth of ERBB2 and RAS driven tumors. Also has a protein kinase activity showing autophosphorylation. The sequence is that of Phosphatidylinositol 4,5-bisphosphate 3-kinase catalytic subunit beta isoform (PIK3CB) from Homo sapiens (Human).